The sequence spans 420 residues: MTSRALYSTRSQLCRHLAHKYLSRSYSTRPSLNEVVIVSAVRTPIGSFKGSLSTLPATKLGSIAIKGAIDKAGIPVEEVKEVYMGNVLQAGEGQAPTRQALLGAGLPLSTPATTINKVCASGMKSIMLASQSLMCGHQDVMVAGGMESMSQVPYIMAREAPPYGGVKMEDLIVKDGLTDVYNKFHMGNCAENTAKNSSISREEQDAFAIKSYTLSKAAWESGILAKEVVPVSIPQRGKPDVVVKEDEEYRKVDFSKVPKLKAVFLKENGTVTAANASTLNDGAAALVLMTADAAQRLNVTPLAKIVAFADAAVAPIDFPIAPAFAVPKVLKAAGIKKEDIAMWEINEAFSVVVLANIKMLDIDPDRVNINGGAVSLGHPIGMSGARIVGHMVHNLKSGQYGLAGICNGGGGASSIVIQKF.

The transit peptide at 1 to 26 directs the protein to the mitochondrion; that stretch reads MTSRALYSTRSQLCRHLAHKYLSRSY. Residue cysteine 119 is the Acyl-thioester intermediate of the active site. CoA contacts are provided by residues tyrosine 212, 251-253, and lysine 256; that span reads KVD. Position 212 (tyrosine 212) interacts with K(+). Residues alanine 273, alanine 274, and alanine 276 each contribute to the K(+) site. A CoA-binding site is contributed by serine 277. Residue valine 374 participates in K(+) binding. Cysteine 406 functions as the Proton donor/acceptor in the catalytic mechanism.

Belongs to the thiolase-like superfamily. Thiolase family. Homotetramer.

The protein resides in the mitochondrion. The enzyme catalyses 2 acetyl-CoA = acetoacetyl-CoA + CoA. The catalysed reaction is propanoyl-CoA + acetyl-CoA = 2-methyl-3-oxobutanoyl-CoA + CoA. The protein operates within lipid metabolism; fatty acid beta-oxidation. Functionally, this is one of the enzymes that catalyzes the last step of the mitochondrial beta-oxidation pathway, an aerobic process breaking down fatty acids into acetyl-CoA. Using free coenzyme A/CoA, catalyzes the thiolytic cleavage of medium- to long-chain 3-oxoacyl-CoAs into acetyl-CoA and a fatty acyl-CoA shortened by two carbon atoms. The activity of the enzyme is reversible and it can also catalyze the condensation of two acetyl-CoA molecules into acetoacetyl-CoA. Thereby, it plays a major role in ketone body metabolism. This chain is Acetyl-CoA acetyltransferase, mitochondrial (acat1), found in Danio rerio (Zebrafish).